The chain runs to 959 residues: Isoleucine--tRNA ligase (959 aa).

A 'HIGH' region motif is present at residues Pro-60–His-70. Residue Glu-569 participates in L-isoleucyl-5'-AMP binding. The 'KMSKS' region motif lies at Lys-610 to Ser-614. Lys-613 provides a ligand contact to ATP. 4 residues coordinate Zn(2+): Cys-928, Cys-931, Cys-948, and Cys-951.

Belongs to the class-I aminoacyl-tRNA synthetase family. IleS type 1 subfamily. As to quaternary structure, monomer. Zn(2+) serves as cofactor.

Its subcellular location is the cytoplasm. It carries out the reaction tRNA(Ile) + L-isoleucine + ATP = L-isoleucyl-tRNA(Ile) + AMP + diphosphate. Functionally, catalyzes the attachment of isoleucine to tRNA(Ile). As IleRS can inadvertently accommodate and process structurally similar amino acids such as valine, to avoid such errors it has two additional distinct tRNA(Ile)-dependent editing activities. One activity is designated as 'pretransfer' editing and involves the hydrolysis of activated Val-AMP. The other activity is designated 'posttransfer' editing and involves deacylation of mischarged Val-tRNA(Ile). The protein is Isoleucine--tRNA ligase of Rippkaea orientalis (strain PCC 8801 / RF-1) (Cyanothece sp. (strain PCC 8801)).